Reading from the N-terminus, the 156-residue chain is Small ribosomal subunit protein uS7 (156 aa).

Belongs to the universal ribosomal protein uS7 family. Part of the 30S ribosomal subunit. Contacts proteins S9 and S11.

Its function is as follows. One of the primary rRNA binding proteins, it binds directly to 16S rRNA where it nucleates assembly of the head domain of the 30S subunit. Is located at the subunit interface close to the decoding center, probably blocks exit of the E-site tRNA. This is Small ribosomal subunit protein uS7 from Rhodococcus erythropolis (strain PR4 / NBRC 100887).